The primary structure comprises 341 residues: uncharacterized protein (341 aa).

Active-site residues include Ser111, Asp247, and His275.

Belongs to the DmpD/TodF/XylF esterase family.

This is an uncharacterized protein from Mycobacterium bovis (strain ATCC BAA-935 / AF2122/97).